The chain runs to 500 residues: MSNSVPLLCFWSLCYCFAAGSPVPFGPEGRLEDKLHKPKATQTEVKPSVRFNLRTSKDPEHEGCYLSVGHSQPLEDCSFNMTAKTFFIIHGWTMSGIFENWLHKLVSALHTREKDANVVVVDWLPLAHQLYTDAVNNTRVVGHSIARMLDWLQEKDDFSLGNVHLIGYSLGAHVAGYAGNFVKGTVGRITGLDPAGPMFEGADIHKRLSPDDADFVDVLHTYTRSFGLSIGIQMPVGHIDIYPNGGDFQPGCGLNDVLGSIAYGTITEVVKCEHERAVHLFVDSLVNQDKPSFAFQCTDSNRFKKGICLSCRKNRCNSIGYNAKKMRNKRNSKMYLKTRAGMPFRVYHYQMKIHVFSYKNMGEIEPTFYVTLYGTNADSQTLPLEIVERIEQNATNTFLVYTEEDLGDLLKIQLTWEGASQSWYNLWKEFRSYLSQPRNPGRELNIRRIRVKSGETQRKLTFCTEDPENTSISPGRELWFRKCRDGWRMKNETSPTVELP.

An N-terminal signal peptide occupies residues 1–20; the sequence is MSNSVPLLCFWSLCYCFAAG. Cysteines 64 and 77 form a disulfide. 2 N-linked (GlcNAc...) asparagine glycosylation sites follow: N80 and N136. The Nucleophile role is filled by S169. D193 serves as the catalytic Charge relay system. C252 and C272 are disulfide-bonded. The active-site Charge relay system is the H274. Cystine bridges form between C297/C316 and C308/C311. Residue 325-337 coordinates heparin; that stretch reads KMRNKRNSKMYLK. The 136-residue stretch at 347 to 482 folds into the PLAT domain; sequence YHYQMKIHVF…SPGRELWFRK (136 aa). N-linked (GlcNAc...) asparagine glycosylation is found at N393, N469, and N491. A disulfide bridge connects residues C463 and C483.

The protein belongs to the AB hydrolase superfamily. Lipase family. As to quaternary structure, head to tail homodimer. In terms of tissue distribution, high level of expression in the liver, placenta, lung, thyroid, kidney, testis and in the corpus luteum of the ovary. Expressed also in coronary artery endothelial cells, umbilical vein endothelial cells and in hepatocytes and osteosarcoma cell lines. Not detected in heart, brain and muscle.

The protein localises to the secreted. The catalysed reaction is a triacylglycerol + H2O = a diacylglycerol + a fatty acid + H(+). It carries out the reaction a 1,2-diacyl-sn-glycero-3-phosphocholine + H2O = a 2-acyl-sn-glycero-3-phosphocholine + a fatty acid + H(+). It catalyses the reaction 1,2,3-tri-(9Z-octadecenoyl)-glycerol + H2O = di-(9Z)-octadecenoylglycerol + (9Z)-octadecenoate + H(+). The enzyme catalyses 1,2,3-tributanoylglycerol + H2O = dibutanoylglycerol + butanoate + H(+). The catalysed reaction is 1,2-dihexadecanoyl-sn-glycero-3-phosphocholine + H2O = hexadecanoyl-sn-glycero-3-phosphocholine + hexadecanoate + H(+). Inhibited by serum and NaCl. Exerts both phospholipase and triglyceride lipase activities. More active as a phospholipase than a triglyceride lipase. Hydrolyzes triglycerides, both with short-chain fatty acyl groups (tributyrin) and long-chain fatty acyl groups (triolein) with similar levels of activity toward both types of substrates. Hydrolyzes high density lipoproteins (HDL) more efficiently than other lipoproteins. In Homo sapiens (Human), this protein is Endothelial lipase (LIPG).